The primary structure comprises 675 residues: Transketolase, chloroplastic (675 aa).

Residues His78 and 127 to 129 contribute to the thiamine diphosphate site; that span reads GPL. Position 168 (Asp168) interacts with Mg(2+). 3 residues coordinate thiamine diphosphate: Gly169, Glu173, and Asn198. Residues Asn198 and Ile200 each coordinate Mg(2+). Position 275 (His275) interacts with thiamine diphosphate. 3 residues coordinate substrate: His275, Arg369, and Ser396. Thiamine diphosphate contacts are provided by residues Glu423 and 450-453; that span reads FTDY. Residue Glu423 is the Proton donor of the active site. Residues His474, Asp482, and Arg533 each contribute to the substrate site.

Homodimer. It depends on Mg(2+) as a cofactor. Ca(2+) is required as a cofactor. The cofactor is Mn(2+). Requires Co(2+) as cofactor. Thiamine diphosphate serves as cofactor.

The protein localises to the plastid. It is found in the chloroplast thylakoid membrane. The catalysed reaction is D-sedoheptulose 7-phosphate + D-glyceraldehyde 3-phosphate = aldehydo-D-ribose 5-phosphate + D-xylulose 5-phosphate. It functions in the pathway carbohydrate biosynthesis; Calvin cycle. Functionally, catalyzes the reversible transfer of a two-carbon ketol group from fructose-6-phosphate or sedoheptulose-7-phosphate to glyceraldehyde-3-phosphate to yield xylulose-5-phosphate and erythrose-4-phosphate or ribose-5-phosphate, respectively. The polypeptide is Transketolase, chloroplastic (Zea mays (Maize)).